The primary structure comprises 282 residues: 4-hydroxy-3-methylbut-2-enyl diphosphate reductase (282 aa).

C12 is a [4Fe-4S] cluster binding site. (2E)-4-hydroxy-3-methylbut-2-enyl diphosphate contacts are provided by H40 and H72. Dimethylallyl diphosphate is bound by residues H40 and H72. Residues H40 and H72 each coordinate isopentenyl diphosphate. A [4Fe-4S] cluster-binding site is contributed by C94. H122 provides a ligand contact to (2E)-4-hydroxy-3-methylbut-2-enyl diphosphate. A dimethylallyl diphosphate-binding site is contributed by H122. Residue H122 coordinates isopentenyl diphosphate. The active-site Proton donor is the E124. Position 160 (T160) interacts with (2E)-4-hydroxy-3-methylbut-2-enyl diphosphate. C188 provides a ligand contact to [4Fe-4S] cluster. The (2E)-4-hydroxy-3-methylbut-2-enyl diphosphate site is built by S216, N218, and S260. Dimethylallyl diphosphate-binding residues include S216, N218, and S260. Isopentenyl diphosphate-binding residues include S216, N218, and S260.

It belongs to the IspH family. The cofactor is [4Fe-4S] cluster.

The catalysed reaction is isopentenyl diphosphate + 2 oxidized [2Fe-2S]-[ferredoxin] + H2O = (2E)-4-hydroxy-3-methylbut-2-enyl diphosphate + 2 reduced [2Fe-2S]-[ferredoxin] + 2 H(+). The enzyme catalyses dimethylallyl diphosphate + 2 oxidized [2Fe-2S]-[ferredoxin] + H2O = (2E)-4-hydroxy-3-methylbut-2-enyl diphosphate + 2 reduced [2Fe-2S]-[ferredoxin] + 2 H(+). It participates in isoprenoid biosynthesis; dimethylallyl diphosphate biosynthesis; dimethylallyl diphosphate from (2E)-4-hydroxy-3-methylbutenyl diphosphate: step 1/1. It functions in the pathway isoprenoid biosynthesis; isopentenyl diphosphate biosynthesis via DXP pathway; isopentenyl diphosphate from 1-deoxy-D-xylulose 5-phosphate: step 6/6. Functionally, catalyzes the conversion of 1-hydroxy-2-methyl-2-(E)-butenyl 4-diphosphate (HMBPP) into a mixture of isopentenyl diphosphate (IPP) and dimethylallyl diphosphate (DMAPP). Acts in the terminal step of the DOXP/MEP pathway for isoprenoid precursor biosynthesis. The polypeptide is 4-hydroxy-3-methylbut-2-enyl diphosphate reductase (Geotalea daltonii (strain DSM 22248 / JCM 15807 / FRC-32) (Geobacter daltonii)).